Reading from the N-terminus, the 116-residue chain is Large ribosomal subunit protein uL18 (116 aa).

It belongs to the universal ribosomal protein uL18 family. As to quaternary structure, part of the 50S ribosomal subunit; part of the 5S rRNA/L5/L18/L25 subcomplex. Contacts the 5S and 23S rRNAs.

Functionally, this is one of the proteins that bind and probably mediate the attachment of the 5S RNA into the large ribosomal subunit, where it forms part of the central protuberance. The polypeptide is Large ribosomal subunit protein uL18 (Pseudomonas putida (strain GB-1)).